Reading from the N-terminus, the 879-residue chain is Phosphoenolpyruvate carboxylase (879 aa).

Active-site residues include His-138 and Lys-546.

It belongs to the PEPCase type 1 family. It depends on Mg(2+) as a cofactor.

The catalysed reaction is oxaloacetate + phosphate = phosphoenolpyruvate + hydrogencarbonate. Forms oxaloacetate, a four-carbon dicarboxylic acid source for the tricarboxylic acid cycle. This Pectobacterium atrosepticum (strain SCRI 1043 / ATCC BAA-672) (Erwinia carotovora subsp. atroseptica) protein is Phosphoenolpyruvate carboxylase.